Here is a 145-residue protein sequence, read N- to C-terminus: Endosomal/vacuolar adapter protein YPT35 (145 aa).

The PX domain occupies 32–145 (ISDVLVGEHH…STVVREFVLG (114 aa)).

Belongs to the YPT35 family.

It localises to the endosome membrane. The protein resides in the vacuole membrane. Recruits the lipid transfer protein VPS13 to endosomal and vacuolar membranes. The polypeptide is Endosomal/vacuolar adapter protein YPT35 (YPT35) (Meyerozyma guilliermondii (strain ATCC 6260 / CBS 566 / DSM 6381 / JCM 1539 / NBRC 10279 / NRRL Y-324) (Yeast)).